A 227-amino-acid polypeptide reads, in one-letter code: Ribosomal RNA large subunit methyltransferase E (227 aa).

5 residues coordinate S-adenosyl-L-methionine: Gly78, Trp80, Asp103, Asp119, and Asp143. Lys183 serves as the catalytic Proton acceptor.

Belongs to the class I-like SAM-binding methyltransferase superfamily. RNA methyltransferase RlmE family.

The protein localises to the cytoplasm. The catalysed reaction is uridine(2552) in 23S rRNA + S-adenosyl-L-methionine = 2'-O-methyluridine(2552) in 23S rRNA + S-adenosyl-L-homocysteine + H(+). Functionally, specifically methylates the uridine in position 2552 of 23S rRNA at the 2'-O position of the ribose in the fully assembled 50S ribosomal subunit. The chain is Ribosomal RNA large subunit methyltransferase E from Rickettsia akari (strain Hartford).